Consider the following 62-residue polypeptide: Protein UL148D (62 aa).

Residues Trp30–Phe50 traverse the membrane as a helical segment.

It is found in the host membrane. This Human cytomegalovirus (strain Merlin) (HHV-5) protein is Protein UL148D (UL148D).